We begin with the raw amino-acid sequence, 290 residues long: HTH-type transcriptional regulator BudR (290 aa).

One can recognise an HTH lysR-type domain in the interval 1-58; it reads MELRYLRYFVAVAEARNFTRAAHDLGISQPPLSQQIQRLEREIGTPLLRRLTRGVELT. The segment at residues 18–37 is a DNA-binding region (H-T-H motif); the sequence is FTRAAHDLGISQPPLSQQIQ.

It belongs to the LysR transcriptional regulatory family.

In terms of biological role, regulator of the budABC operon for 2,3-butanediol synthesis. This is HTH-type transcriptional regulator BudR (budR) from Raoultella terrigena (Klebsiella terrigena).